Reading from the N-terminus, the 434-residue chain is Probable glycine dehydrogenase (decarboxylating) subunit 1 (434 aa).

The protein belongs to the GcvP family. N-terminal subunit subfamily. In terms of assembly, the glycine cleavage system is composed of four proteins: P, T, L and H. In this organism, the P 'protein' is a heterodimer of two subunits.

The enzyme catalyses N(6)-[(R)-lipoyl]-L-lysyl-[glycine-cleavage complex H protein] + glycine + H(+) = N(6)-[(R)-S(8)-aminomethyldihydrolipoyl]-L-lysyl-[glycine-cleavage complex H protein] + CO2. The glycine cleavage system catalyzes the degradation of glycine. The P protein binds the alpha-amino group of glycine through its pyridoxal phosphate cofactor; CO(2) is released and the remaining methylamine moiety is then transferred to the lipoamide cofactor of the H protein. This chain is Probable glycine dehydrogenase (decarboxylating) subunit 1, found in Thermoplasma volcanium (strain ATCC 51530 / DSM 4299 / JCM 9571 / NBRC 15438 / GSS1).